Reading from the N-terminus, the 132-residue chain is Large-conductance mechanosensitive channel (132 aa).

Transmembrane regions (helical) follow at residues 14–34 (VLDMAVGVILGAALKSIVDSL), 39–59 (INPIISLFVGQVDLSGIAVTI), and 68–88 (IGNFLNDVINFLIIAIIVFLI).

Belongs to the MscL family. In terms of assembly, homopentamer.

The protein resides in the cell membrane. Functionally, channel that opens in response to stretch forces in the membrane lipid bilayer. May participate in the regulation of osmotic pressure changes within the cell. In Latilactobacillus sakei subsp. sakei (strain 23K) (Lactobacillus sakei subsp. sakei), this protein is Large-conductance mechanosensitive channel.